Reading from the N-terminus, the 171-residue chain is Large ribosomal subunit protein uL5 (171 aa).

This sequence belongs to the universal ribosomal protein uL5 family. As to quaternary structure, part of the 50S ribosomal subunit; contacts the 5S rRNA and probably tRNA. Forms a bridge to the 30S subunit in the 70S ribosome.

This is one of the proteins that bind and probably mediate the attachment of the 5S RNA into the large ribosomal subunit, where it forms part of the central protuberance. In the 70S ribosome it contacts protein S13 of the 30S subunit (bridge B1b), connecting the 2 subunits; this bridge is implicated in subunit movement. May contact the P site tRNA; the 5S rRNA and some of its associated proteins might help stabilize positioning of ribosome-bound tRNAs. The protein is Large ribosomal subunit protein uL5 of Methanocorpusculum labreanum (strain ATCC 43576 / DSM 4855 / Z).